The sequence spans 138 residues: Probable DNA-directed RNA polymerases I, II, and III subunit RPABC2 (138 aa).

2 stretches are compositionally biased toward acidic residues: residues methionine 1–glutamate 27 and glutamate 35–asparagine 46. Residues methionine 1–asparagine 46 are disordered.

This sequence belongs to the archaeal Rpo6/eukaryotic RPB6 RNA polymerase subunit family. In terms of assembly, component of the RNA polymerase I (Pol I), RNA polymerase II (Pol II) and RNA polymerase III (Pol III) complexes consisting of at least 13, 12 and 17 subunits, respectively.

The protein localises to the nucleus. Its function is as follows. DNA-dependent RNA polymerases catalyze the transcription of DNA into RNA using the four ribonucleoside triphosphates as substrates. Common component of RNA polymerases I, II and III which synthesize ribosomal RNA precursors, mRNA precursors and many functional non-coding RNAs, and small RNAs, such as 5S rRNA and tRNAs, respectively. Pol II is the central component of the basal RNA polymerase II transcription machinery. Pols are composed of mobile elements that move relative to each other. In Pol II, RPB6 is part of the clamp element and together with parts of RPB1 and RPB2 forms a pocket to which the RPB4-RPB7 subcomplex binds. The protein is Probable DNA-directed RNA polymerases I, II, and III subunit RPABC2 of Caenorhabditis briggsae.